Consider the following 330-residue polypeptide: MALFDWHKHFDPVLSYLNETGNTRWTTALKEQLTRRFEDNPHGDMERWHNALQSLPDVADARVDLNRSAITLTSPSGLDPDAMTRLENGLRGLMPWRKGPFDFFGTYIDTEWRSDWKWDRVAPHLADLAGRTILDVGCGSGYHCWRMAGAGARQVIGIDPGLLFMFQFLAVKGYLGQAPVDLLPVRMEDLPADMECFDTTFSMGVLYHRRSPLDHLLELKGTLRRGGELVLETLVVDGPEGYSLMPEDRYGQMRNVWFLPSCPTLLRWLDRTGFRNARVVDVSETTTDEQRQTDWMRFNSLADFLDPDNPSKTIEGYPGPKRATLIAEKP.

Residues Lys-98, Trp-112, Lys-117, Gly-137, 187 to 188 (ME), Met-203, Tyr-207, and Arg-322 each bind carboxy-S-adenosyl-L-methionine. Positions 309-330 (NPSKTIEGYPGPKRATLIAEKP) are disordered.

This sequence belongs to the class I-like SAM-binding methyltransferase superfamily. CmoB family. Homotetramer.

The enzyme catalyses carboxy-S-adenosyl-L-methionine + 5-hydroxyuridine(34) in tRNA = 5-carboxymethoxyuridine(34) in tRNA + S-adenosyl-L-homocysteine + H(+). Catalyzes carboxymethyl transfer from carboxy-S-adenosyl-L-methionine (Cx-SAM) to 5-hydroxyuridine (ho5U) to form 5-carboxymethoxyuridine (cmo5U) at position 34 in tRNAs. The polypeptide is tRNA U34 carboxymethyltransferase (Marinobacter nauticus (strain ATCC 700491 / DSM 11845 / VT8) (Marinobacter aquaeolei)).